The chain runs to 355 residues: Protein ECERIFERUM 16 (355 aa).

2 disordered regions span residues 1–60 (MDSK…LPSN) and 296–315 (HSST…KIHM). A compositionally biased stretch (basic residues) spans 7–28 (AKSKRAHTLHHSKKSHSVHKPK). Composition is skewed to polar residues over residues 41–53 (QGNQ…QSRR) and 296–310 (HSST…NPSD).

Interacts with RST1. Expressed in taproots, lateral roots, root tips, leaf veins, cauline leaves, inflorescences, flowers, and siliques.

It is found in the cytoplasm. The protein localises to the cytosol. It localises to the endoplasmic reticulum. Together with RST1, acts as a cofactor of the cytoplasmic exosome and connects the cytosolic RNA exosome to the SKI complex. Acts as a post-transcriptional gene silencing (PTGS) suppressor. CER16/RIPR can, like RST1 suppress the production of small interfering RNAs (siRNAs) from the CER3 locus, which is involved in cuticule membrane and wax production, and in the typhine and sporopollenin biosynthesis of pollen. The polypeptide is Protein ECERIFERUM 16 (Arabidopsis thaliana (Mouse-ear cress)).